Consider the following 502-residue polypeptide: Glutamate dehydrogenase, mitochondrial (502 aa).

Position 96–98 (96–98 (HHR)) interacts with NAD(+). Substrate-binding residues include Lys-102 and Lys-126. Residue Asp-131 participates in NAD(+) binding. The active site involves Lys-138. Ser-394 contacts substrate.

Belongs to the Glu/Leu/Phe/Val dehydrogenases family. As to quaternary structure, homohexamer.

It localises to the mitochondrion matrix. It carries out the reaction L-glutamate + NAD(+) + H2O = 2-oxoglutarate + NH4(+) + NADH + H(+). The catalysed reaction is L-glutamate + NADP(+) + H2O = 2-oxoglutarate + NH4(+) + NADPH + H(+). With respect to regulation, subject to allosteric regulation. Activated by AMP and ADP. This is Glutamate dehydrogenase, mitochondrial (gluD) from Dictyostelium discoideum (Social amoeba).